Here is a 453-residue protein sequence, read N- to C-terminus: Bifunctional protein GlmU (453 aa).

The pyrophosphorylase stretch occupies residues 1–231 (MERTCLAVIL…EIEMTGCNNR (231 aa)). Residues 10-13 (LAAG), Lys24, Gln77, 82-83 (GT), 105-107 (YGD), Gly143, Glu157, Asn172, and Asn229 each bind UDP-N-acetyl-alpha-D-glucosamine. Mg(2+) is bound at residue Asp107. Asn229 provides a ligand contact to Mg(2+). The linker stretch occupies residues 232–252 (AELAVIERFWQERRRREMMLA). The interval 253–453 (GVTMIAPETV…AIKAAKRAKA (201 aa)) is N-acetyltransferase. UDP-N-acetyl-alpha-D-glucosamine is bound by residues Arg318 and Lys336. His348 functions as the Proton acceptor in the catalytic mechanism. Residues Tyr351 and Asn362 each contribute to the UDP-N-acetyl-alpha-D-glucosamine site. Acetyl-CoA contacts are provided by residues Ala365, 371 to 372 (NY), Ser390, Ser408, and Arg425.

In the N-terminal section; belongs to the N-acetylglucosamine-1-phosphate uridyltransferase family. The protein in the C-terminal section; belongs to the transferase hexapeptide repeat family. In terms of assembly, homotrimer. Mg(2+) serves as cofactor.

The protein resides in the cytoplasm. It catalyses the reaction alpha-D-glucosamine 1-phosphate + acetyl-CoA = N-acetyl-alpha-D-glucosamine 1-phosphate + CoA + H(+). The enzyme catalyses N-acetyl-alpha-D-glucosamine 1-phosphate + UTP + H(+) = UDP-N-acetyl-alpha-D-glucosamine + diphosphate. Its pathway is nucleotide-sugar biosynthesis; UDP-N-acetyl-alpha-D-glucosamine biosynthesis; N-acetyl-alpha-D-glucosamine 1-phosphate from alpha-D-glucosamine 6-phosphate (route II): step 2/2. The protein operates within nucleotide-sugar biosynthesis; UDP-N-acetyl-alpha-D-glucosamine biosynthesis; UDP-N-acetyl-alpha-D-glucosamine from N-acetyl-alpha-D-glucosamine 1-phosphate: step 1/1. It participates in bacterial outer membrane biogenesis; LPS lipid A biosynthesis. Its function is as follows. Catalyzes the last two sequential reactions in the de novo biosynthetic pathway for UDP-N-acetylglucosamine (UDP-GlcNAc). The C-terminal domain catalyzes the transfer of acetyl group from acetyl coenzyme A to glucosamine-1-phosphate (GlcN-1-P) to produce N-acetylglucosamine-1-phosphate (GlcNAc-1-P), which is converted into UDP-GlcNAc by the transfer of uridine 5-monophosphate (from uridine 5-triphosphate), a reaction catalyzed by the N-terminal domain. The protein is Bifunctional protein GlmU of Rhizobium etli (strain CIAT 652).